Consider the following 1116-residue polypeptide: Protein translocase subunit SecA (1116 aa).

ATP is bound by residues glutamine 177, 195–199 (GEGKT), and aspartate 692.

It belongs to the SecA family. As to quaternary structure, monomer and homodimer. Part of the essential Sec protein translocation apparatus which comprises SecA, SecYEG and auxiliary proteins SecDF. Other proteins may also be involved.

It localises to the cell inner membrane. Its subcellular location is the cytoplasm. It catalyses the reaction ATP + H2O + cellular proteinSide 1 = ADP + phosphate + cellular proteinSide 2.. Functionally, part of the Sec protein translocase complex. Interacts with the SecYEG preprotein conducting channel. Has a central role in coupling the hydrolysis of ATP to the transfer of proteins into and across the cell membrane, serving as an ATP-driven molecular motor driving the stepwise translocation of polypeptide chains across the membrane. This is Protein translocase subunit SecA from Flavobacterium psychrophilum (strain ATCC 49511 / DSM 21280 / CIP 103535 / JIP02/86).